Reading from the N-terminus, the 465-residue chain is Anthocyanidin 3-O-glucosyltransferase 2 (465 aa).

Histidine 22 functions as the Proton acceptor in the catalytic mechanism. Histidine 22 and glutamine 87 together coordinate an anthocyanidin. Aspartate 122 acts as the Charge relay in catalysis. Residue threonine 145 participates in UDP-alpha-D-glucose binding. Histidine 154 provides a ligand contact to an anthocyanidin. Residues alanine 345, glutamine 347, histidine 362, tryptophan 365, asparagine 366, serine 367, and glutamate 370 each contribute to the UDP-alpha-D-glucose site. Residue glycine 385 participates in an anthocyanidin binding. The UDP-alpha-D-glucose site is built by aspartate 386 and glutamine 387.

It belongs to the UDP-glycosyltransferase family. Highest expression detected in fruit, with very low levels detected in petal and leaf.

The catalysed reaction is an anthocyanidin + UDP-alpha-D-glucose + H(+) = an anthocyanidin 3-O-beta-D-glucoside + UDP. The enzyme catalyses pelargonidin + UDP-alpha-D-glucose = pelargonidin 3-O-beta-D-glucoside + UDP. It catalyses the reaction cyanidin + UDP-alpha-D-glucose = cyanidin 3-O-beta-D-glucoside + UDP + H(+). Its pathway is pigment biosynthesis; anthocyanin biosynthesis. Its function is as follows. In the presence of other necessary color factors, this glycosylation reaction allows the accumulation of anthocyanin pigments. Anthocyanidins are the preferred substrates, while flavonols are only a minor substrate in vitro. This Fragaria ananassa (Strawberry) protein is Anthocyanidin 3-O-glucosyltransferase 2.